A 149-amino-acid polypeptide reads, in one-letter code: Probable cyclic pyranopterin monophosphate synthase (149 aa).

Residues 67–69 (LCH) and 103–104 (ME) contribute to the substrate site. The active site involves D118.

Belongs to the MoaC family. As to quaternary structure, homohexamer; trimer of dimers.

The enzyme catalyses (8S)-3',8-cyclo-7,8-dihydroguanosine 5'-triphosphate = cyclic pyranopterin phosphate + diphosphate. It functions in the pathway cofactor biosynthesis; molybdopterin biosynthesis. Functionally, catalyzes the conversion of (8S)-3',8-cyclo-7,8-dihydroguanosine 5'-triphosphate to cyclic pyranopterin monophosphate (cPMP). This Saccharolobus solfataricus (strain ATCC 35092 / DSM 1617 / JCM 11322 / P2) (Sulfolobus solfataricus) protein is Probable cyclic pyranopterin monophosphate synthase.